Reading from the N-terminus, the 180-residue chain is Large ribosomal subunit protein uL5 (180 aa).

The protein belongs to the universal ribosomal protein uL5 family. In terms of assembly, part of the 50S ribosomal subunit; part of the 5S rRNA/L5/L18/L25 subcomplex. Contacts the 5S rRNA and the P site tRNA. Forms a bridge to the 30S subunit in the 70S ribosome.

This is one of the proteins that bind and probably mediate the attachment of the 5S RNA into the large ribosomal subunit, where it forms part of the central protuberance. In the 70S ribosome it contacts protein S13 of the 30S subunit (bridge B1b), connecting the 2 subunits; this bridge is implicated in subunit movement. Contacts the P site tRNA; the 5S rRNA and some of its associated proteins might help stabilize positioning of ribosome-bound tRNAs. This Rubrobacter xylanophilus (strain DSM 9941 / JCM 11954 / NBRC 16129 / PRD-1) protein is Large ribosomal subunit protein uL5.